Reading from the N-terminus, the 238-residue chain is Ribonuclease Rh (238 aa).

Positions 1-16 are cleaved as a signal peptide; it reads MKAVLALATLIGSTLA. Cystine bridges form between Cys19/Cys36, Cys26/Cys69, Cys35/Cys136, Cys79/Cys128, and Cys198/Cys229. Active-site residues include His62, Glu121, and His125.

Belongs to the RNase T2 family.

It catalyses the reaction a ribonucleotidyl-ribonucleotide-RNA + H2O = a 3'-end 3'-phospho-ribonucleotide-RNA + a 5'-end dephospho-ribonucleoside-RNA + H(+). Functionally, this is a base non-specific ribonuclease. This chain is Ribonuclease Rh, found in Rhizopus niveus.